A 577-amino-acid polypeptide reads, in one-letter code: Torulene dioxygenase (577 aa).

The interval 1–20 is disordered; sequence MALNGPGVYHRTREHEQEDA. Positions 239, 291, 361, and 570 each coordinate Fe(2+).

It belongs to the carotenoid oxygenase family. Fe(2+) is required as a cofactor.

The protein localises to the cytoplasm. The protein resides in the cytosol. The catalysed reaction is torulene + O2 = 4'-apo-beta-carotenal + 3-methyl-2-butenal. The protein operates within carotenoid biosynthesis. Functionally, torulene dioxygenase; part of pathway that mediates the biosynthesis of neurosporaxanthin, a carboxylic apocarotenoid acting as an essential protective pigments and leading to orange pigmentation. CarT mediates the cleavage of torulene into beta-apo-4'-carotenal, the aldehyde corresponding to the acidic neurosporaxanthin. Is also active on other monocyclic synthetic substrates such as beta-apo-8'-carotenal and beta-apo-10'-carotenal to produce beta-apo-14'-carotenal and retinal(beta-apo-15'-carotenal), respectively. Neurosporaxanthin is synthesized from geranyl-geranyl pyrophosphate (GGPP) through several enzymatic activities. Phytoene synthase activity performed by the bifunctional enzyme carAR first produces phytoene from geranyl-geranyl pyrophosphate (GGPP). The phytoene dehydrogenase carB then introduces 4 desaturations to lead to lycopene which is substrate of the carotene cyclase activity of carAR that leads to the production of gamma-carotene. CarB then performs a 5th desaturation reaction to yield torulene. Torulene is the substrate of the dioxidase carT that breaks the molecule, removing five carbon atoms to yield beta-apo-4'-carotenal, whereas the aldehyde dehydrogenase carD mediates the last step by converting beta-apo-4'-carotenal into neurosporaxanthin. The polypeptide is Torulene dioxygenase (Gibberella fujikuroi (strain CBS 195.34 / IMI 58289 / NRRL A-6831) (Bakanae and foot rot disease fungus)).